The following is a 698-amino-acid chain: uncharacterized protein (698 aa).

Positions 1–17 (MKKRHLLSLLALGISTA) are cleaved as a signal peptide. Cys-18 carries the N-palmitoyl cysteine lipid modification. Cys-18 is lipidated: S-diacylglycerol cysteine.

To E.coli YmcA.

The protein localises to the cell membrane. This is an uncharacterized protein from Escherichia coli (strain K12).